A 2195-amino-acid polypeptide reads, in one-letter code: Genome polyprotein (2195 aa).

The N-myristoyl glycine; by host moiety is linked to residue G2. Topologically, residues 2–1505 are cytoplasmic; the sequence is GAQVSTQKTG…HVSRAFICLQ (1504 aa). The tract at residues 567 to 583 is amphipathic alpha-helix; that stretch reads LLQGDVVEAVENAVARV. Active-site for protease 2A activity residues include H882 and D900. Zn(2+)-binding residues include C917 and C919. C971 functions as the For protease 2A activity in the catalytic mechanism. Residues C977 and H979 each coordinate Zn(2+). Residues 1111 to 1183 are membrane-binding; the sequence is NNGWLKKFTE…EQSAPSQSDQ (73 aa). Residues 1111-1249 form an oligomerization region; the sequence is NNGWLKKFTE…SPGAGKSVAT (139 aa). The RNA-binding stretch occupies residues 1132 to 1136; the sequence is SIKIQ. Residues 1215 to 1371 enclose the SF3 helicase domain; that stretch reads EKKMSNYIQF…SMYSQNGKIN (157 aa). Zn(2+) contacts are provided by C1379, C1391, and C1396. A C4-type; degenerate zinc finger spans residues 1379–1396; that stretch reads CDEECCPVNFKRCCPLVC. Positions 1423-1430 are RNA-binding; it reads EYNHRHSV. Positions 1434 to 1439 are oligomerization; sequence LEALFQ. The stretch at 1506–1521 is an intramembrane region; it reads ALTTFVSVAGIIYIIY. The Cytoplasmic portion of the chain corresponds to 1522–2195; sequence KLFAGFQGAY…TLRRKWLDSF (674 aa). Y1531 carries the post-translational modification O-(5'-phospho-RNA)-tyrosine. The Peptidase C3 domain maps to 1551 to 1729; that stretch reads GPAFEFAVAM…FSAALLKHYF (179 aa). Catalysis depends on for protease 3C activity residues H1590, E1621, and C1697. Positions 1960–2076 constitute a RdRp catalytic domain; it reads GHLIAFDYSG…SYPWPIDASL (117 aa). D1966 and D2062 together coordinate Mg(2+).

Belongs to the picornaviruses polyprotein family. As to quaternary structure, interacts with capsid protein VP1 and capsid protein VP3 to form heterotrimeric protomers. Interacts with capsid protein VP0, and capsid protein VP3 to form heterotrimeric protomers. Five protomers subsequently associate to form pentamers which serve as building blocks for the capsid. Interacts with capsid protein VP2, capsid protein VP3 and capsid protein VP4 following cleavage of capsid protein VP0. In terms of assembly, interacts with capsid protein VP1 and capsid protein VP3 in the mature capsid. As to quaternary structure, interacts with capsid protein VP0 and capsid protein VP1 to form heterotrimeric protomers. Five protomers subsequently associate to form pentamers which serve as building blocks for the capsid. Interacts with capsid protein VP4 in the mature capsid. Interacts with protein 2C; this interaction may be important for virion morphogenesis. Interacts with capsid protein VP1 and capsid protein VP3. In terms of assembly, homodimer. As to quaternary structure, homohexamer; forms a hexameric ring structure with 6-fold symmetry characteristic of AAA+ ATPases. Interacts (via N-terminus) with host RTN3 (via reticulon domain); this interaction is important for viral replication. Interacts with capsid protein VP3; this interaction may be important for virion morphogenesis. Interacts with protein 3CD. In terms of assembly, homodimer. Interacts with host GBF1. Interacts (via GOLD domain) with host ACBD3 (via GOLD domain); this interaction allows the formation of a viral protein 3A/ACBD3 heterotetramer with a 2:2 stoichiometry, which will stimulate the recruitment of host PI4KB in order to synthesize PI4P at the viral RNA replication sites. As to quaternary structure, interacts with RNA-directed RNA polymerase. Interacts with protein 3AB and with RNA-directed RNA polymerase. In terms of assembly, interacts with Viral protein genome-linked and with protein 3CD. The cofactor is Mg(2+). In terms of processing, specific enzymatic cleavages in vivo by the viral proteases yield processing intermediates and the mature proteins. Myristoylation is required for the formation of pentamers during virus assembly. Further assembly of 12 pentamers and a molecule of genomic RNA generates the provirion. Post-translationally, during virion maturation, immature virions are rendered infectious following cleavage of VP0 into VP4 and VP2. This maturation seems to be an autocatalytic event triggered by the presence of RNA in the capsid and it is followed by a conformational change infectious virion. In terms of processing, myristoylation is required during RNA encapsidation and formation of the mature virus particle. VPg is uridylylated by the polymerase into VPg-pUpU. This acts as a nucleotide-peptide primer for the genomic RNA replication.

The protein localises to the virion. The protein resides in the host cytoplasm. It is found in the host cytoplasmic vesicle membrane. Its subcellular location is the host nucleus. It catalyses the reaction a ribonucleoside 5'-triphosphate + H2O = a ribonucleoside 5'-diphosphate + phosphate + H(+). The enzyme catalyses Selective cleavage of Tyr-|-Gly bond in the picornavirus polyprotein.. The catalysed reaction is RNA(n) + a ribonucleoside 5'-triphosphate = RNA(n+1) + diphosphate. It carries out the reaction Selective cleavage of Gln-|-Gly bond in the poliovirus polyprotein. In other picornavirus reactions Glu may be substituted for Gln, and Ser or Thr for Gly.. Replication or transcription is subject to high level of random mutations by the nucleotide analog ribavirin. In terms of biological role, forms an icosahedral capsid of pseudo T=3 symmetry with capsid proteins VP2 and VP3. The capsid is 300 Angstroms in diameter, composed of 60 copies of each capsid protein and enclosing the viral positive strand RNA genome. Capsid protein VP1 mainly forms the vertices of the capsid. Capsid protein VP1 interacts with host cell receptor to provide virion attachment to target host cells. This attachment induces virion internalization. Tyrosine kinases are probably involved in the entry process. After binding to its receptor, the capsid undergoes conformational changes. Capsid protein VP1 N-terminus (that contains an amphipathic alpha-helix) and capsid protein VP4 are externalized. Together, they shape a pore in the host membrane through which viral genome is translocated to host cell cytoplasm. Forms an icosahedral capsid of pseudo T=3 symmetry with capsid proteins VP2 and VP3. The capsid is 300 Angstroms in diameter, composed of 60 copies of each capsid protein and enclosing the viral positive strand RNA genome. Functionally, lies on the inner surface of the capsid shell. After binding to the host receptor, the capsid undergoes conformational changes. Capsid protein VP4 is released, Capsid protein VP1 N-terminus is externalized, and together, they shape a pore in the host membrane through which the viral genome is translocated into the host cell cytoplasm. Its function is as follows. Component of immature procapsids, which is cleaved into capsid proteins VP4 and VP2 after maturation. Allows the capsid to remain inactive before the maturation step. In terms of biological role, cysteine protease that cleaves viral polyprotein and specific host proteins. It is responsible for the autocatalytic cleavage between the P1 and P2 regions, which is the first cleavage occurring in the polyprotein. Also cleaves the host translation initiation factor EIF4G1, in order to shut down the capped cellular mRNA translation. Inhibits the host nucleus-cytoplasm protein and RNA trafficking by cleaving host members of the nuclear pores. Counteracts stress granule formation probably by antagonizing its assembly or promoting its dissassembly. Plays an essential role in the virus replication cycle by acting as a viroporin. Creates a pore in the host endoplasmic reticulum and as a consequence releases Ca2+ in the cytoplasm of infected cell. In turn, high levels of cytoplasmic calcium may trigger membrane trafficking and transport of viral ER-associated proteins to viroplasms, sites of viral genome replication. Functionally, induces and associates with structural rearrangements of intracellular membranes. Displays RNA-binding, nucleotide binding and NTPase activities. May play a role in virion morphogenesis and viral RNA encapsidation by interacting with the capsid protein VP3. Its function is as follows. Localizes the viral replication complex to the surface of membranous vesicles. Together with protein 3CD binds the Cis-Active RNA Element (CRE) which is involved in RNA synthesis initiation. Acts as a cofactor to stimulate the activity of 3D polymerase, maybe through a nucleid acid chaperone activity. In terms of biological role, localizes the viral replication complex to the surface of membranous vesicles. It inhibits host cell endoplasmic reticulum-to-Golgi apparatus transport and causes the disassembly of the Golgi complex, possibly through GBF1 interaction. This would result in depletion of MHC, trail receptors and IFN receptors at the host cell surface. Plays an essential role in viral RNA replication by recruiting ACBD3 and PI4KB at the viral replication sites, thereby allowing the formation of the rearranged membranous structures where viral replication takes place. Acts as a primer for viral RNA replication and remains covalently bound to viral genomic RNA. VPg is uridylylated prior to priming replication into VPg-pUpU. The oriI viral genomic sequence may act as a template for this. The VPg-pUpU is then used as primer on the genomic RNA poly(A) by the RNA-dependent RNA polymerase to replicate the viral genome. During genome replication, the VPg-RNA linkage is removed by the host TDP2, thereby accelerating replication. During the late stage of the replication cycle, host TDP2 is excluded from sites of viral RNA synthesis and encapsidation, allowing for the generation of progeny virions. Functionally, involved in the viral replication complex and viral polypeptide maturation. It exhibits protease activity with a specificity and catalytic efficiency that is different from protease 3C. Protein 3CD lacks polymerase activity. The 3C domain in the context of protein 3CD may have an RNA binding activity. Protein 3CD binds to the 5'UTR of the viral genome. Its function is as follows. Replicates the viral genomic RNA on the surface of intracellular membranes. May form linear arrays of subunits that propagate along a strong head-to-tail interaction called interface-I. Covalently attaches UMP to a tyrosine of VPg, which is used to prime RNA synthesis. The positive stranded RNA genome is first replicated at virus induced membranous vesicles, creating a dsRNA genomic replication form. This dsRNA is then used as template to synthesize positive stranded RNA genomes. ss(+)RNA genomes are either translated, replicated or encapsidated. In terms of biological role, major viral protease that mediates proteolytic processing of the polyprotein. Cleaves host EIF5B, contributing to host translation shutoff. Also cleaves host PABPC1, contributing to host translation shutoff. Cleaves host NLRP1, triggers host N-glycine-mediated degradation of the autoinhibitory NLRP1 N-terminal fragment. This chain is Genome polyprotein, found in Echovirus 11 (strain Gregory).